We begin with the raw amino-acid sequence, 311 residues long: Olfactory receptor 10G4 (311 aa).

The Extracellular portion of the chain corresponds to 1 to 23; sequence MSNASLVTAFILTGLPHAPGLDA. Asn3 carries N-linked (GlcNAc...) asparagine glycosylation. Residues 24-44 form a helical membrane-spanning segment; the sequence is LLFGIFLVVYVLTVLGNLLIL. Topologically, residues 45–52 are cytoplasmic; the sequence is LVIRVDSH. Residues 53–73 form a helical membrane-spanning segment; that stretch reads LHTPMYYFLTNLSFIDMWFST. The Extracellular portion of the chain corresponds to 74 to 98; that stretch reads VTVPKMLMTLVSPSGRAISFHSCVA. A disulfide bond links Cys96 and Cys188. The helical transmembrane segment at 99 to 119 threads the bilayer; it reads QLYFFHFLGSTECFLYTVMSY. At 120 to 138 the chain is on the cytoplasmic side; sequence DRYLAISYPLRYTSMMSGS. Residues 139–159 form a helical membrane-spanning segment; the sequence is RCALLATGTWLSGSLHSAVQT. At 160–196 the chain is on the extracellular side; that stretch reads ILTFHLPYCGPNQIQHYFCDAPPILKLACADTSANVM. The helical transmembrane segment at 197-216 threads the bilayer; that stretch reads VIFVDIGIVASGCFVLIVLS. Over 217–236 the chain is Cytoplasmic; sequence YVSIVCSILRIRTSDGRRRA. A helical transmembrane segment spans residues 237 to 257; sequence FQTCASHCIVVLCFFVPCVVI. Residues 258 to 268 are Extracellular-facing; the sequence is YLRPGSMDAMD. Residues 269-289 form a helical membrane-spanning segment; sequence GVVAIFYTVLTPLLNPVVYTL. The Cytoplasmic portion of the chain corresponds to 290–311; it reads RNKEVKKAVLKLRDKVAHPQRK.

This sequence belongs to the G-protein coupled receptor 1 family.

The protein resides in the cell membrane. Odorant receptor. This Homo sapiens (Human) protein is Olfactory receptor 10G4 (OR10G4).